The following is a 110-amino-acid chain: Insulin-2 (110 aa).

The signal sequence occupies residues Met1–Ala24. Disulfide bonds link Cys31/Cys96, Cys43/Cys109, and Cys95/Cys100. Residues Glu57–Gln87 constitute a propeptide, c peptide.

The protein belongs to the insulin family. Heterodimer of a B chain and an A chain linked by two disulfide bonds.

The protein localises to the secreted. Functionally, insulin decreases blood glucose concentration. It increases cell permeability to monosaccharides, amino acids and fatty acids. It accelerates glycolysis, the pentose phosphate cycle, and glycogen synthesis in liver. This chain is Insulin-2 (Ins2), found in Mus musculus (Mouse).